The sequence spans 320 residues: Ribosomal protein L11 methyltransferase (320 aa).

S-adenosyl-L-methionine contacts are provided by Thr165, Gly186, Asp208, and Asn251.

This sequence belongs to the methyltransferase superfamily. PrmA family.

The protein resides in the cytoplasm. It catalyses the reaction L-lysyl-[protein] + 3 S-adenosyl-L-methionine = N(6),N(6),N(6)-trimethyl-L-lysyl-[protein] + 3 S-adenosyl-L-homocysteine + 3 H(+). Methylates ribosomal protein L11. The chain is Ribosomal protein L11 methyltransferase from Limosilactobacillus fermentum (strain NBRC 3956 / LMG 18251) (Lactobacillus fermentum).